We begin with the raw amino-acid sequence, 34 residues long: MSDIN-like toxin proprotein 7 (34 aa).

Residues 1-10 constitute a propeptide that is removed on maturation; that stretch reads MSDINATRLP. The segment at residues 11-17 is a cross-link (cyclopeptide (Ala-Pro)); that stretch reads AWLTDCP. The propeptide occupies 18 to 34; that stretch reads CVGDDVNRLLTRGESLC.

Belongs to the MSDIN fungal toxin family. In terms of processing, processed by the macrocyclase-peptidase enzyme POPB to yield a toxic cyclic heptapeptide. POPB first removes 10 residues from the N-terminus. Conformational trapping of the remaining peptide forces the enzyme to release this intermediate rather than proceed to macrocyclization. The enzyme rebinds the remaining peptide in a different conformation and catalyzes macrocyclization of the N-terminal 7 residues. In terms of tissue distribution, expressed in basidiocarps.

Probable toxin that belongs to the MSDIN-like toxin family responsible for a large number of food poisoning cases and deaths. The chain is MSDIN-like toxin proprotein 7 from Amanita exitialis (Guangzhou destroying angel).